Here is a 273-residue protein sequence, read N- to C-terminus: Putative pyruvate, phosphate dikinase regulatory protein 2 (273 aa).

Residue 151-158 (GVSRTSKT) participates in ADP binding.

It belongs to the pyruvate, phosphate/water dikinase regulatory protein family. PDRP subfamily.

The enzyme catalyses N(tele)-phospho-L-histidyl/L-threonyl-[pyruvate, phosphate dikinase] + ADP = N(tele)-phospho-L-histidyl/O-phospho-L-threonyl-[pyruvate, phosphate dikinase] + AMP + H(+). The catalysed reaction is N(tele)-phospho-L-histidyl/O-phospho-L-threonyl-[pyruvate, phosphate dikinase] + phosphate + H(+) = N(tele)-phospho-L-histidyl/L-threonyl-[pyruvate, phosphate dikinase] + diphosphate. Bifunctional serine/threonine kinase and phosphorylase involved in the regulation of the pyruvate, phosphate dikinase (PPDK) by catalyzing its phosphorylation/dephosphorylation. The polypeptide is Putative pyruvate, phosphate dikinase regulatory protein 2 (Syntrophomonas wolfei subsp. wolfei (strain DSM 2245B / Goettingen)).